A 273-amino-acid chain; its full sequence is Shikimate dehydrogenase (NADP(+)) (273 aa).

Shikimate contacts are provided by residues serine 14–serine 16 and threonine 61. Catalysis depends on lysine 65, which acts as the Proton acceptor. Residue glutamate 77 coordinates NADP(+). The shikimate site is built by asparagine 86 and aspartate 102. NADP(+) contacts are provided by residues glycine 126–alanine 130, asparagine 150–lysine 155, and methionine 213. Tyrosine 215 contributes to the shikimate binding site. Glycine 237 provides a ligand contact to NADP(+).

The protein belongs to the shikimate dehydrogenase family. In terms of assembly, homodimer.

The catalysed reaction is shikimate + NADP(+) = 3-dehydroshikimate + NADPH + H(+). Its pathway is metabolic intermediate biosynthesis; chorismate biosynthesis; chorismate from D-erythrose 4-phosphate and phosphoenolpyruvate: step 4/7. Functionally, involved in the biosynthesis of the chorismate, which leads to the biosynthesis of aromatic amino acids. Catalyzes the reversible NADPH linked reduction of 3-dehydroshikimate (DHSA) to yield shikimate (SA). The chain is Shikimate dehydrogenase (NADP(+)) from Aliivibrio fischeri (strain MJ11) (Vibrio fischeri).